The following is a 167-amino-acid chain: 2-C-methyl-D-erythritol 2,4-cyclodiphosphate synthase (167 aa).

Residues Asp-9 and His-11 each contribute to the a divalent metal cation site. Residues 9-11 and 35-36 contribute to the 4-CDP-2-C-methyl-D-erythritol 2-phosphate site; these read DVH and HS. His-43 contacts a divalent metal cation. 4-CDP-2-C-methyl-D-erythritol 2-phosphate contacts are provided by residues 57-59, 62-66, 133-136, Phe-140, and Arg-143; these read DIG, FPDTD, and TTTE.

It belongs to the IspF family. Homotrimer. The cofactor is a divalent metal cation.

The enzyme catalyses 4-CDP-2-C-methyl-D-erythritol 2-phosphate = 2-C-methyl-D-erythritol 2,4-cyclic diphosphate + CMP. Its pathway is isoprenoid biosynthesis; isopentenyl diphosphate biosynthesis via DXP pathway; isopentenyl diphosphate from 1-deoxy-D-xylulose 5-phosphate: step 4/6. Involved in the biosynthesis of isopentenyl diphosphate (IPP) and dimethylallyl diphosphate (DMAPP), two major building blocks of isoprenoid compounds. Catalyzes the conversion of 4-diphosphocytidyl-2-C-methyl-D-erythritol 2-phosphate (CDP-ME2P) to 2-C-methyl-D-erythritol 2,4-cyclodiphosphate (ME-CPP) with a corresponding release of cytidine 5-monophosphate (CMP). The polypeptide is 2-C-methyl-D-erythritol 2,4-cyclodiphosphate synthase (Glaesserella parasuis serovar 5 (strain SH0165) (Haemophilus parasuis)).